Reading from the N-terminus, the 145-residue chain is MKGNYLVIDKRVLPDVYEKVVFAQKLLKDGKVKEITEATKIAGISRSVYYKYKDYIFDFAETSQGKKVTFNLIVKDQTGVLSGVINYISEQGGNILTINQGIPINGVANISVTIDMSTLIGDIKTLLNGLSDIQYVEKIEFVAME.

Positions threonine 69–methionine 144 constitute an ACT domain.

The protein belongs to the UPF0735 family.

This Clostridium botulinum (strain Alaska E43 / Type E3) protein is UPF0735 ACT domain-containing protein CLH_2637.